We begin with the raw amino-acid sequence, 420 residues long: Glutamyl-tRNA reductase (420 aa).

Substrate contacts are provided by residues 49–52, S109, 114–116, and Q120; these read TCNR and EPQ. Residue C50 is the Nucleophile of the active site. 189 to 194 is a binding site for NADP(+); the sequence is GAGETI.

The protein belongs to the glutamyl-tRNA reductase family. Homodimer.

It carries out the reaction (S)-4-amino-5-oxopentanoate + tRNA(Glu) + NADP(+) = L-glutamyl-tRNA(Glu) + NADPH + H(+). Its pathway is porphyrin-containing compound metabolism; protoporphyrin-IX biosynthesis; 5-aminolevulinate from L-glutamyl-tRNA(Glu): step 1/2. Functionally, catalyzes the NADPH-dependent reduction of glutamyl-tRNA(Glu) to glutamate 1-semialdehyde (GSA). This chain is Glutamyl-tRNA reductase, found in Yersinia enterocolitica serotype O:8 / biotype 1B (strain NCTC 13174 / 8081).